A 485-amino-acid polypeptide reads, in one-letter code: Aspartyl/glutamyl-tRNA(Asn/Gln) amidotransferase subunit B (485 aa).

This sequence belongs to the GatB/GatE family. GatB subfamily. In terms of assembly, heterotrimer of A, B and C subunits.

It catalyses the reaction L-glutamyl-tRNA(Gln) + L-glutamine + ATP + H2O = L-glutaminyl-tRNA(Gln) + L-glutamate + ADP + phosphate + H(+). The enzyme catalyses L-aspartyl-tRNA(Asn) + L-glutamine + ATP + H2O = L-asparaginyl-tRNA(Asn) + L-glutamate + ADP + phosphate + 2 H(+). Functionally, allows the formation of correctly charged Asn-tRNA(Asn) or Gln-tRNA(Gln) through the transamidation of misacylated Asp-tRNA(Asn) or Glu-tRNA(Gln) in organisms which lack either or both of asparaginyl-tRNA or glutaminyl-tRNA synthetases. The reaction takes place in the presence of glutamine and ATP through an activated phospho-Asp-tRNA(Asn) or phospho-Glu-tRNA(Gln). This is Aspartyl/glutamyl-tRNA(Asn/Gln) amidotransferase subunit B from Borrelia hermsii (strain HS1 / DAH).